The primary structure comprises 521 residues: Importin subunit alpha-4 (521 aa).

The segment at 1–29 is disordered; it reads MAENPSLENHRIKSFKNKGRDVETMRRHR. A2 is modified (N-acetylalanine). Residues 2–58 enclose the IBB domain; the sequence is AENPSLENHRIKSFKNKGRDVETMRRHRNEVTVELRKNKRDEHLLKKRNVPQEESLE. The span at 18 to 29 shows a compositional bias: basic and acidic residues; the sequence is KGRDVETMRRHR. The Nuclear localization signal motif lies at 43 to 52; sequence EHLLKKRNVP. S56 and S60 each carry phosphoserine. The ARM 1; truncated repeat unit spans residues 66–106; it reads FKAQNVTLEAILQNATSDNPVVQLSAVQAARKLLSSDRNPP. 8 ARM repeats span residues 107–149, 150–194, 195–233, 234–278, 279–318, 319–360, 361–400, and 401–443; these read IDDL…TSAQ, TQAV…CRDY, VISL…NKDP, PPPM…EQIQ, MVID…TDEQ, TQVV…NQQQ, VQAV…ISGR, and KDQV…IMAG. The segment at 137–229 is NLS binding site (major); the sequence is WALTNIASGT…VTWVIVNLCR (93 aa). Residues 306 to 394 are NLS binding site (minor); sequence RAVGNIVTGT…QKEAAWAISN (89 aa). One copy of the ARM 10; atypical repeat lies at 447–485; the sequence is STIAEIIEECGGLEKIEVLQQHENEDIYKLAFEIIDQYF. At Y484 the chain carries Phosphotyrosine.

Belongs to the importin alpha family. In terms of assembly, forms a complex with importin subunit beta-1. Interacts with DDX21. Interacts with NCBP1, NCBP2/CBP20 and NCBP3. Interacts with RCC1. Interacts with ZC3H11A. As to quaternary structure, (Microbial infection) Interacts with HIV-1 integrase; this interaction might play a role in nuclear import of HIV pre-integration complex. (Microbial infection) Interacts with influenza virus nucleoprotein; this interaction might play a role in nuclear import of viral genome. Ubiquitous. Highest levels in heart and skeletal muscle.

It localises to the cytoplasm. It is found in the nucleus. Its function is as follows. Functions in nuclear protein import as an adapter protein for nuclear receptor KPNB1. Binds specifically and directly to substrates containing either a simple or bipartite NLS motif. Docking of the importin/substrate complex to the nuclear pore complex (NPC) is mediated by KPNB1 through binding to nucleoporin FxFG repeats and the complex is subsequently translocated through the pore by an energy requiring, Ran-dependent mechanism. At the nucleoplasmic side of the NPC, Ran binds to importin-beta and the three components separate and importin-alpha and -beta are re-exported from the nucleus to the cytoplasm where GTP hydrolysis releases Ran from importin. The directionality of nuclear import is thought to be conferred by an asymmetric distribution of the GTP- and GDP-bound forms of Ran between the cytoplasm and nucleus. In vitro, mediates the nuclear import of human cytomegalovirus UL84 by recognizing a non-classical NLS. Recognizes NLSs of influenza A virus nucleoprotein probably through ARM repeats 7-9. The protein is Importin subunit alpha-4 (KPNA3) of Homo sapiens (Human).